The primary structure comprises 378 residues: Protein-glutamate methylesterase/protein-glutamine glutaminase 2 (378 aa).

The Response regulatory domain maps to 4 to 121; it reads KVLVVDDSGF…SRNPEKVKQL (118 aa). At aspartate 55 the chain carries 4-aspartylphosphate. A disordered region spans residues 141-188; that stretch reads APAPAAAPTPAPIPAAAPSSFGSHSAPARPAPAPAPTRAPAASASSPA. Over residues 145 to 155 the composition is skewed to pro residues; sequence AAAPTPAPIPA. Low complexity-rich tracts occupy residues 156–168 and 178–188; these read AAPS…SAPA and RAPAASASSPA. In terms of domain architecture, CheB-type methylesterase spans 187-378; it reads PAPKRKNYKL…IGKHIVEACV (192 aa). Active-site residues include serine 202, histidine 229, and aspartate 322.

Belongs to the CheB family. Phosphorylated by CheA. Phosphorylation of the N-terminal regulatory domain activates the methylesterase activity.

It localises to the cytoplasm. It carries out the reaction [protein]-L-glutamate 5-O-methyl ester + H2O = L-glutamyl-[protein] + methanol + H(+). It catalyses the reaction L-glutaminyl-[protein] + H2O = L-glutamyl-[protein] + NH4(+). Involved in chemotaxis. Part of a chemotaxis signal transduction system that modulates chemotaxis in response to various stimuli. Catalyzes the demethylation of specific methylglutamate residues introduced into the chemoreceptors (methyl-accepting chemotaxis proteins or MCP) by CheR. Also mediates the irreversible deamidation of specific glutamine residues to glutamic acid. The chain is Protein-glutamate methylesterase/protein-glutamine glutaminase 2 from Pseudomonas fluorescens (strain Pf0-1).